A 199-amino-acid polypeptide reads, in one-letter code: Transgelin-3 (199 aa).

One can recognise a Calponin-homology (CH) domain in the interval 24–136; sequence ADLENKLVDW…RTLMALGSVA (113 aa). S163 carries the post-translational modification Phosphoserine. The stretch at 174 to 199 is one Calponin-like repeat; sequence IGLQMGSNKGASQAGMTGYGMPRQIM. The span at 176 to 188 shows a compositional bias: polar residues; it reads LQMGSNKGASQAG. Positions 176 to 199 are disordered; that stretch reads LQMGSNKGASQAGMTGYGMPRQIM.

This sequence belongs to the calponin family. Widely expressed in the brain. Expression is increased in the superior frontal cortex of alcoholics, but not in the motor cortex or cerebellum.

The sequence is that of Transgelin-3 (TAGLN3) from Homo sapiens (Human).